The chain runs to 70 residues: Translational regulator CsrA (70 aa).

This sequence belongs to the CsrA/RsmA family. As to quaternary structure, homodimer; the beta-strands of each monomer intercalate to form a hydrophobic core, while the alpha-helices form wings that extend away from the core.

It is found in the cytoplasm. A translational regulator that binds mRNA to regulate translation initiation and/or mRNA stability. Usually binds in the 5'-UTR at or near the Shine-Dalgarno sequence preventing ribosome-binding, thus repressing translation. Its main target seems to be the major flagellin gene, while its function is anatagonized by FliW. The polypeptide is Translational regulator CsrA (Rhodopirellula baltica (strain DSM 10527 / NCIMB 13988 / SH1)).